Here is a 137-residue protein sequence, read N- to C-terminus: Peptidyl-tRNA hydrolase ArfB (137 aa).

The disordered stretch occupies residues 102-137; the sequence is EKKRRPTKPTLGSKTRRLEGKARRSTVKAGRGKVDF.

It belongs to the prokaryotic/mitochondrial release factor family. In terms of assembly, associated with 70S ribosomes and polysomes.

The protein resides in the cytoplasm. It catalyses the reaction an N-acyl-L-alpha-aminoacyl-tRNA + H2O = an N-acyl-L-amino acid + a tRNA + H(+). Rescues stalled ribosomes. Can hydrolyze peptidyl-tRNA on ribosomes stalled by both non-stop mRNAs and mRNAs that contain rare codon clusters. The protein is Peptidyl-tRNA hydrolase ArfB (arfB) of Pseudomonas putida (Arthrobacter siderocapsulatus).